Here is a 229-residue protein sequence, read N- to C-terminus: Type-5 uracil-DNA glycosylase (229 aa).

Cys-19, Cys-22, Cys-123, and Cys-138 together coordinate [4Fe-4S] cluster.

The protein belongs to the uracil-DNA glycosylase (UDG) superfamily. Type 5 (UDGb) family.

Its function is as follows. DNA glycosylase with broad substrate specificity. This chain is Type-5 uracil-DNA glycosylase, found in Mycobacterium leprae (strain TN).